Consider the following 292-residue polypeptide: MFNRIFLFLLTNLAVLMLAGIVMSLLGVNPAQMSGLLVMAAIFGFGGSFISLLLSKFMAKRSTGAQVITEPRTPTERWLLETVRRHAQAAGIGMPEVAVYDGPEINAFATGANRNDALVAVSTGLLQNMDQDEAEAVLGHEIAHVANGDMVTMALLQGVLNTFVIVLARVVGGIIDSALSGNREGGRGFAYYIIVFALEMVFGLFATMIAMWFSRRREFRADAGGAQLAGRSKMIAALERLSLNHGQNTLPSQVQAFGISGGVGEGLRRLFLSHPPLTERIAALRAASGSAM.

A run of 2 helical transmembrane segments spans residues 5-25 and 34-54; these read IFLF…VMSL and SGLL…SLLL. Histidine 140 is a Zn(2+) binding site. The active site involves glutamate 141. Histidine 144 serves as a coordination point for Zn(2+). 2 consecutive transmembrane segments (helical) span residues 155–175 and 193–213; these read LLQG…GGII and IIVF…AMWF. Position 218 (glutamate 218) interacts with Zn(2+).

This sequence belongs to the peptidase M48B family. Zn(2+) is required as a cofactor.

The protein resides in the cell inner membrane. This Xanthomonas euvesicatoria pv. vesicatoria (strain 85-10) (Xanthomonas campestris pv. vesicatoria) protein is Protease HtpX.